The chain runs to 102 residues: NADH-quinone oxidoreductase subunit K (102 aa).

Helical transmembrane passes span 5-25, 31-51, and 62-82; these read LGHF…GIFL, IVLL…FVAF, and IFVF…LALL.

This sequence belongs to the complex I subunit 4L family. NDH-1 is composed of 14 different subunits. Subunits NuoA, H, J, K, L, M, N constitute the membrane sector of the complex.

The protein resides in the cell inner membrane. The enzyme catalyses a quinone + NADH + 5 H(+)(in) = a quinol + NAD(+) + 4 H(+)(out). Functionally, NDH-1 shuttles electrons from NADH, via FMN and iron-sulfur (Fe-S) centers, to quinones in the respiratory chain. The immediate electron acceptor for the enzyme in this species is believed to be ubiquinone. Couples the redox reaction to proton translocation (for every two electrons transferred, four hydrogen ions are translocated across the cytoplasmic membrane), and thus conserves the redox energy in a proton gradient. The chain is NADH-quinone oxidoreductase subunit K from Variovorax paradoxus (strain S110).